We begin with the raw amino-acid sequence, 627 residues long: Alpha-terpineol synthase, chloroplastic (627 aa).

The transit peptide at 1–53 (MAGITGVMNMKLAARPSSGRHSRGCRPAVVPSAGKQMLLVRRHPPGSASWPTR) directs the protein to the chloroplast. The segment at 13–90 (AARPSSGRHS…EDRASRNTSS (78 aa)) is disordered. (2E)-geranyl diphosphate is bound by residues Arg339, Asp376, Asp380, Arg518, and Asp521. Residues Asp376 and Asp380 each coordinate Mg(2+). The DDXXD motif signature appears at 376 to 380 (DDTYD). Mg(2+) is bound by residues Asp521, Ser525, and Glu529.

The protein belongs to the terpene synthase family. Tpsb subfamily. Monomer. Requires Mg(2+) as cofactor. Mn(2+) is required as a cofactor. As to expression, expressed in seedling leaf sheaths and roots.

The protein resides in the plastid. Its subcellular location is the chloroplast. It catalyses the reaction (2E)-geranyl diphosphate + H2O = (S)-alpha-terpineol + diphosphate. The catalysed reaction is (2E)-geranyl diphosphate = (4S)-limonene + diphosphate. The enzyme catalyses (2E)-geranyl diphosphate = gamma-terpinene + diphosphate. It carries out the reaction (2E)-geranyl diphosphate = beta-myrcene + diphosphate. It catalyses the reaction (2E)-geranyl diphosphate = terpinolene + diphosphate. The catalysed reaction is (2E)-geranyl diphosphate + H2O = 4-terpineol + diphosphate. The protein operates within secondary metabolite biosynthesis; terpenoid biosynthesis. In terms of biological role, component of the volatile terpenes biosynthesis pathways. Mediates the synthesis of a blend of monoterpenes. Converts mainly geranyl diphosphate to alpha-terpineol. Also triggers the biosynthesis of minor monoterpenes including limonene, gamma-terpinene, beta-myrcene, terpinolene and 4-terpineol. The sequence is that of Alpha-terpineol synthase, chloroplastic from Zea mays (Maize).